The following is a 100-amino-acid chain: Integration host factor subunit beta (100 aa).

The protein belongs to the bacterial histone-like protein family. Heterodimer of an alpha and a beta chain.

In terms of biological role, this protein is one of the two subunits of integration host factor, a specific DNA-binding protein that functions in genetic recombination as well as in transcriptional and translational control. The protein is Integration host factor subunit beta of Rhodospirillum rubrum (strain ATCC 11170 / ATH 1.1.1 / DSM 467 / LMG 4362 / NCIMB 8255 / S1).